The sequence spans 344 residues: 1-acyl-sn-glycerol-3-phosphate acyltransferase BAT2, chloroplastic (344 aa).

Residues 1–49 (MDVASAPGVSSHPPYYSKPICSSQSSLIRIPINKGCCFARSSNLITSLH) constitute a chloroplast transit peptide. Residues 113 to 133 (GICFCLVAGVSAIVLIVLMIT) traverse the membrane as a helical segment. The short motif at 188–193 (HQSFLD) is the HXXXXD motif element. The helical transmembrane segment at 210–230 (TGIFVIPVIGWAMSMMGVVPL) threads the bilayer.

Belongs to the 1-acyl-sn-glycerol-3-phosphate acyltransferase family. Widely expressed.

The protein resides in the plastid. It is found in the chloroplast membrane. It catalyses the reaction a fatty acyl-[ACP] + a 1-acyl-sn-glycero-3-phosphate = a 1,2-diacyl-sn-glycero-3-phosphate + holo-[ACP]. The catalysed reaction is a 1-acyl-sn-glycero-3-phosphate + an acyl-CoA = a 1,2-diacyl-sn-glycero-3-phosphate + CoA. It participates in phospholipid metabolism; CDP-diacylglycerol biosynthesis; CDP-diacylglycerol from sn-glycerol 3-phosphate: step 2/3. Its function is as follows. Plastidial enzyme of the prokaryotic glycerol-3-phosphate pathway that converts lysophosphatidic acid (LPA) into phosphatidic acid by incorporating an acyl moiety at position sn-2. Utilizes palmitoyl-ACP (16:0-ACP) to produce phosphatidic acid containing a saturated group at position sn-2, which is characteristic of lipids synthesized by the prokaryotic pathway. In vitro, can use 16:0-CoA as acyl donor. This is 1-acyl-sn-glycerol-3-phosphate acyltransferase BAT2, chloroplastic from Brassica napus (Rape).